Here is a 130-residue protein sequence, read N- to C-terminus: MSLMDPLADALTNIRNNELQGNDSCVIKPASKLIGHVLSTMQKENYIGNFELVDDGKAGIFNVELVGNINKCGVIKPRHAVKNTEFEDYEKRYLPAKNFGILIVTTPQGVMTHHEAKEAGIGGRLLVYVY.

It belongs to the universal ribosomal protein uS8 family. As to quaternary structure, part of the 30S ribosomal subunit.

In terms of biological role, one of the primary rRNA binding proteins, it binds directly to 16S rRNA central domain where it helps coordinate assembly of the platform of the 30S subunit. This chain is Small ribosomal subunit protein uS8, found in Methanosphaera stadtmanae (strain ATCC 43021 / DSM 3091 / JCM 11832 / MCB-3).